The following is a 121-amino-acid chain: Large ribosomal subunit protein bL12 (121 aa).

The protein belongs to the bacterial ribosomal protein bL12 family. In terms of assembly, homodimer. Part of the ribosomal stalk of the 50S ribosomal subunit. Forms a multimeric L10(L12)X complex, where L10 forms an elongated spine to which 2 to 4 L12 dimers bind in a sequential fashion. Binds GTP-bound translation factors.

In terms of biological role, forms part of the ribosomal stalk which helps the ribosome interact with GTP-bound translation factors. Is thus essential for accurate translation. This chain is Large ribosomal subunit protein bL12, found in Erwinia tasmaniensis (strain DSM 17950 / CFBP 7177 / CIP 109463 / NCPPB 4357 / Et1/99).